A 624-amino-acid polypeptide reads, in one-letter code: MAAPRWAVWAVLLLRLLVPAARVLANMEGDALHSLRTNLVDPNNVLQSWDPTLVNPCTWFHVTCNNDNSVIRVDLGNAALSGTLVPQLGQLKNLQYLELYSNNISGTIPSELGNLTNLVSLDLYLNNFTGPIPDSLGNLLKLRFLRLNNNSLSGSIPKSLTAITALQVLDLSNNNLSGEVPSTGSFSLFTPISFANNPSLCGPGTTKPCPGAPPFSPPPPYNPPTPVQSPGSSSSTGAIAGGVAAGAALLFAIPAIGFAWYRRRKPQEHFFDVPAEEDPEVHLGQLKRFSLRELQVATDTFSNKNILGRGGFGKVYKGRLADGSLVAVKRLKEERTPGGELQFQTEVEMISMAVHRNLLRLRGFCMTPTERLLVYPYMANGSVASRLRERPPSEPPLDWRTRRRIALGSARGLSYLHDHCDPKIIHRDVKAANILLDEDFEAVVGDFGLAKLMDYKDTHVTTAVRGTIGHIAPEYLSTGKSSEKTDVFGYGIMLLELITGQRAFDLARLANDDDVMLLDWVKGLLKEKRLEMLVDPDLQSNYIDVEVESLIQVALLCTQGSPTERPKMAEVVRMLEGDGLAERWEEWQKIEVVRQEVELGPHRNSEWIVDSTDNLHAVELSGPR.

An N-terminal signal peptide occupies residues 1-25; it reads MAAPRWAVWAVLLLRLLVPAARVLA. The Extracellular segment spans residues 26 to 237; the sequence is NMEGDALHSL…QSPGSSSSTG (212 aa). 4 LRR repeats span residues 91–115, 117–139, 140–163, and 164–188; these read LKNLQYLELYSNNISGTIPSELGNL, NLVSLDLYLNNFTGPIPDSLGNL, LKLRFLRLNNNSLSGSIPKSLTAI, and TALQVLDLSNNNLSGEVPSTGSFSL. 5 N-linked (GlcNAc...) asparagine glycosylation sites follow: asparagine 103, asparagine 114, asparagine 127, asparagine 149, and asparagine 175. The disordered stretch occupies residues 205 to 236; sequence TTKPCPGAPPFSPPPPYNPPTPVQSPGSSSST. The segment covering 210–227 has biased composition (pro residues); it reads PGAPPFSPPPPYNPPTPV. A helical transmembrane segment spans residues 238–258; the sequence is AIAGGVAAGAALLFAIPAIGF. Over 259 to 624 the chain is Cytoplasmic; it reads AWYRRRKPQE…LHAVELSGPR (366 aa). Residues 301–588 form the Protein kinase domain; sequence FSNKNILGRG…GLAERWEEWQ (288 aa). ATP contacts are provided by residues 307–315 and lysine 329; that span reads LGRGGFGKV. Aspartate 428 serves as the catalytic Proton acceptor.

This sequence belongs to the protein kinase superfamily. Ser/Thr protein kinase family. As to quaternary structure, forms homodimers. Interacts with BRI1. Interacts with REM4.1.

It localises to the cell membrane. It carries out the reaction L-seryl-[protein] + ATP = O-phospho-L-seryl-[protein] + ADP + H(+). The enzyme catalyses L-threonyl-[protein] + ATP = O-phospho-L-threonyl-[protein] + ADP + H(+). Its function is as follows. LRR receptor kinase involved in defense response. Does not seem to be required specifically for XA21-mediated immunity or basal resistance to Xanthomonas oryzae pv. oryzae (Xoo), or immunity to Magnaporthe oryzae. Involved in brassinosteroid (BR) signaling pathway. Acts as a coreceptor of BRI1. Forms at the plasma membrane a receptor complex with BRI1 which is activated in response to brassinolide. Phosphorylates BRI1. Required for normal plant growth and leaf development. Possesses kinase activity in vitro. The chain is LRR receptor kinase BAK1 from Oryza sativa subsp. indica (Rice).